The chain runs to 295 residues: Sulfotransferase 1E1 (295 aa).

Residue 48-53 participates in 3'-phosphoadenylyl sulfate binding; that stretch reads KSGTTW. A substrate-binding site is contributed by 106 to 108; it reads KSH. Residue H108 is the Proton acceptor of the active site. The 3'-phosphoadenylyl sulfate site is built by R130, S138, and Y193. Phosphoserine; by PKA is present on residues S216 and S228. 3'-phosphoadenylyl sulfate is bound by residues 227-232 and 257-259; these read TSFQEM and RKG.

Belongs to the sulfotransferase 1 family. As to quaternary structure, homodimer.

It localises to the cytoplasm. It is found in the cytosol. It catalyses the reaction estrone + 3'-phosphoadenylyl sulfate = estrone 3-sulfate + adenosine 3',5'-bisphosphate + H(+). It carries out the reaction (24S)-hydroxycholesterol + 3'-phosphoadenylyl sulfate = (24S)-hydroxycholesterol 3-sulfate + adenosine 3',5'-bisphosphate + H(+). The enzyme catalyses 17beta-estradiol + 3'-phosphoadenylyl sulfate = 17beta-estradiol 3-sulfate + adenosine 3',5'-bisphosphate + H(+). The catalysed reaction is 3beta-hydroxyandrost-5-en-17-one + 3'-phosphoadenylyl sulfate = dehydroepiandrosterone 3-sulfate + adenosine 3',5'-bisphosphate + H(+). It catalyses the reaction 4-ethylphenol + 3'-phosphoadenylyl sulfate = 4-ethylphenyl sulfate + adenosine 3',5'-bisphosphate + H(+). Its activity is regulated as follows. Inhibited by estradiol. Its function is as follows. Sulfotransferase that utilizes 3'-phospho-5'-adenylyl sulfate (PAPS) as sulfonate donor to catalyze the sulfate conjugation of estradiol and estrone. Is a key enzyme in estrogen homeostasis, the sulfation of estrogens leads to their inactivation. Also sulfates dehydroepiandrosterone (DHEA), pregnenolone, (24S)-hydroxycholesterol and xenobiotic compounds like ethinylestradiol, equalenin, diethyl stilbesterol and 1-naphthol at significantly lower efficiency. Does not sulfonate cortisol, testosterone and dopamine. May play a role in gut microbiota-host metabolic interaction. O-sulfonates 4-ethylphenol (4-EP), a dietary tyrosine-derived metabolite produced by gut bacteria. The product 4-EPS crosses the blood-brain barrier and may negatively regulate oligodendrocyte maturation and myelination, affecting the functional connectivity of different brain regions associated with the limbic system. In Bos taurus (Bovine), this protein is Sulfotransferase 1E1 (SULT1E1).